The sequence spans 243 residues: Ubiquinone/menaquinone biosynthesis C-methyltransferase UbiE (243 aa).

Residues threonine 69, aspartate 90, and 116 to 117 (DA) contribute to the S-adenosyl-L-methionine site.

This sequence belongs to the class I-like SAM-binding methyltransferase superfamily. MenG/UbiE family.

The enzyme catalyses a 2-demethylmenaquinol + S-adenosyl-L-methionine = a menaquinol + S-adenosyl-L-homocysteine + H(+). The catalysed reaction is a 2-methoxy-6-(all-trans-polyprenyl)benzene-1,4-diol + S-adenosyl-L-methionine = a 5-methoxy-2-methyl-3-(all-trans-polyprenyl)benzene-1,4-diol + S-adenosyl-L-homocysteine + H(+). The protein operates within quinol/quinone metabolism; menaquinone biosynthesis; menaquinol from 1,4-dihydroxy-2-naphthoate: step 2/2. It functions in the pathway cofactor biosynthesis; ubiquinone biosynthesis. Methyltransferase required for the conversion of demethylmenaquinol (DMKH2) to menaquinol (MKH2) and the conversion of 2-polyprenyl-6-methoxy-1,4-benzoquinol (DDMQH2) to 2-polyprenyl-3-methyl-6-methoxy-1,4-benzoquinol (DMQH2). This Burkholderia cenocepacia (strain HI2424) protein is Ubiquinone/menaquinone biosynthesis C-methyltransferase UbiE.